A 291-amino-acid chain; its full sequence is Phosphatidylglycerol--prolipoprotein diacylglyceryl transferase (291 aa).

7 consecutive transmembrane segments (helical) span residues 21–41 (VALH…MWLA), 60–80 (LLYA…VLFY), 96–116 (WDGG…MIIF), 130–150 (FIAP…FING), 198–218 (SQLY…NLFI), 225–245 (GAVS…VEFF), and 260–280 (ISMG…MMVW). Position 143 (R143) interacts with a 1,2-diacyl-sn-glycero-3-phospho-(1'-sn-glycerol).

It belongs to the Lgt family.

The protein resides in the cell inner membrane. It catalyses the reaction L-cysteinyl-[prolipoprotein] + a 1,2-diacyl-sn-glycero-3-phospho-(1'-sn-glycerol) = an S-1,2-diacyl-sn-glyceryl-L-cysteinyl-[prolipoprotein] + sn-glycerol 1-phosphate + H(+). It participates in protein modification; lipoprotein biosynthesis (diacylglyceryl transfer). In terms of biological role, catalyzes the transfer of the diacylglyceryl group from phosphatidylglycerol to the sulfhydryl group of the N-terminal cysteine of a prolipoprotein, the first step in the formation of mature lipoproteins. The sequence is that of Phosphatidylglycerol--prolipoprotein diacylglyceryl transferase from Salmonella choleraesuis (strain SC-B67).